A 79-amino-acid polypeptide reads, in one-letter code: Small ribosomal subunit protein uS17 (79 aa).

It belongs to the universal ribosomal protein uS17 family. In terms of assembly, part of the 30S ribosomal subunit.

One of the primary rRNA binding proteins, it binds specifically to the 5'-end of 16S ribosomal RNA. The polypeptide is Small ribosomal subunit protein uS17 (Rhizobium leguminosarum bv. trifolii (strain WSM2304)).